A 482-amino-acid chain; its full sequence is Hydroxymethylglutaryl-CoA synthase A (482 aa).

The Proton donor/acceptor role is filled by Glu85. The Acyl-thioester intermediate role is filled by Cys119. Cys119, Thr161, Ser211, His249, Lys258, Asn325, and Ser358 together coordinate (3S)-3-hydroxy-3-methylglutaryl-CoA. Residue His249 is the Proton donor/acceptor of the active site.

It belongs to the thiolase-like superfamily. HMG-CoA synthase family.

It carries out the reaction acetoacetyl-CoA + acetyl-CoA + H2O = (3S)-3-hydroxy-3-methylglutaryl-CoA + CoA + H(+). Its pathway is metabolic intermediate biosynthesis; (R)-mevalonate biosynthesis; (R)-mevalonate from acetyl-CoA: step 2/3. Functionally, condenses acetyl-CoA with acetoacetyl-CoA to form HMG-CoA, which is the substrate for HMG-CoA reductase. This chain is Hydroxymethylglutaryl-CoA synthase A (hgsA), found in Dictyostelium discoideum (Social amoeba).